Consider the following 466-residue polypeptide: Reticulophagy regulator 3 (466 aa).

Topologically, residues 1–80 are cytoplasmic; sequence MEEAEGVAAA…WCLGLNAAFW (80 aa). Ser26 is modified (phosphoserine). The helical transmembrane segment at 81 to 101 threads the bilayer; the sequence is FFALTSLRFVFLLAFSLMIIV. The Lumenal portion of the chain corresponds to 102–168; sequence CIDQWKNKIW…LLFKKQNPGK (67 aa). A helical transmembrane segment spans residues 169-187; the sequence is FCLLSCGVLTFLAMLGRYI. The Cytoplasmic segment spans residues 188 to 192; it reads PGLLL. Residues 193 to 211 form a helical membrane-spanning segment; the sequence is SYLMLVIIMMWPLAVYHRL. Topologically, residues 212–381 are lumenal; sequence WDRAYVRLKP…ASRNEAALPE (170 aa). A disordered region spans residues 244 to 263; sequence RRRALHSERATDSHSDSEEE. Residues 248–259 are compositionally biased toward basic and acidic residues; it reads LHSERATDSHSD. Thr254 is subject to Phosphothreonine. A phosphoserine mark is found at Ser258 and Ser260. Thr283 is subject to Phosphothreonine. 4 positions are modified to phosphoserine: Ser285, Ser288, Ser293, and Ser303. The disordered stretch occupies residues 285–335; sequence SEHSDAEVSCTENGTFNLSRGQTPLTEGSEDLDGHSDPEESFARDLPDFPS. Polar residues predominate over residues 294–310; the sequence is CTENGTFNLSRGQTPLT. Thr307 and Thr310 each carry phosphothreonine. 3 positions are modified to phosphoserine: Ser313, Ser320, and Ser360. A compositionally biased stretch (basic and acidic residues) spans 316–331; the sequence is LDGHSDPEESFARDLP. Residues 382–401 traverse the membrane as a helical segment; it reads LLLSSLPGGSNLTSNLASLV. Topologically, residues 402–466 are cytoplasmic; it reads SQGMIQLALS…QLDPASSRSH (65 aa). Residues 412–444 are disordered; the sequence is EASQTDPSGPPPRRATRGFLRAPSSDLDTDAEG. The residue at position 440 (Thr440) is a Phosphothreonine. The LIR motif motif lies at 445 to 450; it reads DDFELL.

Belongs to the RETREG family. In terms of assembly, interacts with ATG8 family modifier proteins MAP1LC3A, MAP1LC3B, GABARAPL1 and GABARAPL2. Also interacts with ATG8 family modifier protein GABARAP. Interacts with CANX. Interacts with RTN4 isoform B. In terms of tissue distribution, widely expressed with highest levels in brain, lung, liver, muscle and spleen (protein level). Mainly expressed in the central nervous system and in parenchymatous organs including liver, lung and kidney.

It localises to the endoplasmic reticulum membrane. Its function is as follows. Endoplasmic reticulum (ER)-anchored autophagy regulator which exists in an inactive state under basal conditions but is activated following cellular stress. When activated, induces ER fragmentation and mediates ER delivery into lysosomes through sequestration into autophagosomes via interaction with ATG8 family proteins. Promotes ER membrane curvature and ER tubulation required for subsequent ER fragmentation and engulfment into autophagosomes. Required for collagen quality control in a LIR motif-dependent manner. Mediates NRF1-enhanced neurite outgrowth. The protein is Reticulophagy regulator 3 (Retreg3) of Mus musculus (Mouse).